Here is a 269-residue protein sequence, read N- to C-terminus: Chromophore lyase CRL, chloroplastic (269 aa).

The chain crosses the membrane as a helical span at residues 19–36 (ARGLVVKTLVLIGGALLI).

This sequence belongs to the CpcT/CpeT biliprotein lyase family. In terms of tissue distribution, mostly expressed in shoot apices, to a lower extent, in leaves, inflorescence stems, buds and cotyledons, and, at low levels, in roots and siliques.

The protein resides in the plastid. It is found in the chloroplast outer membrane. Its function is as follows. Covalently attaches a chromophore to Cys residue(s) of phycobiliproteins. Required for plastid division, and involved in cell differentiation and regulation of the cell division plane. Maintenance of plastid homeostasis controls plant preconditioning to stress and stress acclimation. Functionally, confers sensitivity to cabbage leaf curl virus (CaLCuV), probably by supporting viral movement. This is Chromophore lyase CRL, chloroplastic (CRL) from Arabidopsis thaliana (Mouse-ear cress).